A 549-amino-acid chain; its full sequence is Probable protein kinase UbiB (549 aa).

In terms of domain architecture, Protein kinase spans 123-501 (DFNETPLASA…QQQAHKSNYL (379 aa)). ATP-binding positions include 129-137 (LASASISQV) and K152. The Proton acceptor role is filled by D287. The next 2 helical transmembrane spans lie at 498–518 (SNYL…LFNQ) and 520–540 (ATLL…IIGW).

It belongs to the ABC1 family. UbiB subfamily.

The protein localises to the cell inner membrane. Its pathway is cofactor biosynthesis; ubiquinone biosynthesis [regulation]. Is probably a protein kinase regulator of UbiI activity which is involved in aerobic coenzyme Q (ubiquinone) biosynthesis. The chain is Probable protein kinase UbiB from Shewanella oneidensis (strain ATCC 700550 / JCM 31522 / CIP 106686 / LMG 19005 / NCIMB 14063 / MR-1).